The primary structure comprises 551 residues: DNA double-strand break repair helicase HerA (551 aa).

ATP contacts are provided by residues Arg152, 161-166, and 507-508; these read GAGKSN and RI.

It belongs to the HerA family. As to quaternary structure, homohexamer. Interacts with NurA.

The catalysed reaction is Couples ATP hydrolysis with the unwinding of duplex DNA at the replication fork by translocating in the 5'-3' direction. This creates two antiparallel DNA single strands (ssDNA). The leading ssDNA polymer is the template for DNA polymerase III holoenzyme which synthesizes a continuous strand.. The enzyme catalyses ATP + H2O = ADP + phosphate + H(+). It catalyses the reaction Couples ATP hydrolysis with the unwinding of duplex DNA by translocating in the 3'-5' direction.. With respect to regulation, helicase activity is stimulated in the presence of NurA. Its function is as follows. Involved in DNA double-strand break (DSB) repair. Probably acts with NurA to stimulate resection of the 5' strand and produce the long 3' single-strand that is required for RadA loading. Has DNA-dependent ATPase activity and DNA helicase activity. The polypeptide is DNA double-strand break repair helicase HerA (Pyrococcus furiosus (strain ATCC 43587 / DSM 3638 / JCM 8422 / Vc1)).